Here is a 160-residue protein sequence, read N- to C-terminus: 2-C-methyl-D-erythritol 2,4-cyclodiphosphate synthase (160 aa).

Residues D11 and H13 each contribute to the a divalent metal cation site. Residues 11–13 (DVH) and 37–38 (HS) contribute to the 4-CDP-2-C-methyl-D-erythritol 2-phosphate site. A divalent metal cation is bound at residue H45. 4-CDP-2-C-methyl-D-erythritol 2-phosphate contacts are provided by residues 59–61 (DIG), 64–68 (FPDTD), 135–138 (TTTE), F142, and R145.

Belongs to the IspF family. Homotrimer. A divalent metal cation serves as cofactor.

It carries out the reaction 4-CDP-2-C-methyl-D-erythritol 2-phosphate = 2-C-methyl-D-erythritol 2,4-cyclic diphosphate + CMP. It participates in isoprenoid biosynthesis; isopentenyl diphosphate biosynthesis via DXP pathway; isopentenyl diphosphate from 1-deoxy-D-xylulose 5-phosphate: step 4/6. Involved in the biosynthesis of isopentenyl diphosphate (IPP) and dimethylallyl diphosphate (DMAPP), two major building blocks of isoprenoid compounds. Catalyzes the conversion of 4-diphosphocytidyl-2-C-methyl-D-erythritol 2-phosphate (CDP-ME2P) to 2-C-methyl-D-erythritol 2,4-cyclodiphosphate (ME-CPP) with a corresponding release of cytidine 5-monophosphate (CMP). The protein is 2-C-methyl-D-erythritol 2,4-cyclodiphosphate synthase of Alcanivorax borkumensis (strain ATCC 700651 / DSM 11573 / NCIMB 13689 / SK2).